Consider the following 610-residue polypeptide: Glutamine--fructose-6-phosphate aminotransferase [isomerizing] (610 aa).

Residue C2 is the Nucleophile; for GATase activity of the active site. The 218-residue stretch at 2–219 folds into the Glutamine amidotransferase type-2 domain; sequence CGIVGYAGKK…SGEWGYFSQN (218 aa). SIS domains follow at residues 287 to 431 and 459 to 600; these read SKDV…SDEE and MSSH…PDQP. Catalysis depends on K605, which acts as the For Fru-6P isomerization activity.

In terms of assembly, homodimer.

It localises to the cytoplasm. It catalyses the reaction D-fructose 6-phosphate + L-glutamine = D-glucosamine 6-phosphate + L-glutamate. Catalyzes the first step in hexosamine metabolism, converting fructose-6P into glucosamine-6P using glutamine as a nitrogen source. The protein is Glutamine--fructose-6-phosphate aminotransferase [isomerizing] of Leptospira interrogans serogroup Icterohaemorrhagiae serovar copenhageni (strain Fiocruz L1-130).